The primary structure comprises 449 residues: Xylose isomerase (449 aa).

Catalysis depends on residues H103 and D106. Positions 234, 270, 273, 298, 309, 311, and 342 each coordinate Mg(2+).

Belongs to the xylose isomerase family. Homotetramer. Requires Mg(2+) as cofactor.

The protein localises to the cytoplasm. It catalyses the reaction alpha-D-xylose = alpha-D-xylulofuranose. This Levilactobacillus brevis (strain ATCC 367 / BCRC 12310 / CIP 105137 / JCM 1170 / LMG 11437 / NCIMB 947 / NCTC 947) (Lactobacillus brevis) protein is Xylose isomerase.